A 457-amino-acid polypeptide reads, in one-letter code: Chromosomal replication initiator protein DnaA (457 aa).

Positions 1–75 (MDAQLNNLWE…ALKIVTSRKF (75 aa)) are domain I, interacts with DnaA modulators. A domain II region spans residues 75-118 (FKIEFYLESDLEEEKENEEKQKEEKKDNTNDVDGSIVVSDEMSA). The interval 87 to 108 (EEKENEEKQKEEKKDNTNDVDG) is disordered. Basic and acidic residues predominate over residues 91–103 (NEEKQKEEKKDNT). Residues 119–335 (TLNPKYTFQS…GALIRIIAYS (217 aa)) are domain III, AAA+ region. The ATP site is built by Gly-163, Gly-165, Lys-166, and Thr-167. Residues 336-457 (SLTNRDVSVD…NDITKKLTQK (122 aa)) are domain IV, binds dsDNA.

It belongs to the DnaA family. In terms of assembly, oligomerizes as a right-handed, spiral filament on DNA at oriC.

The protein localises to the cytoplasm. In terms of biological role, plays an essential role in the initiation and regulation of chromosomal replication. ATP-DnaA binds to the origin of replication (oriC) to initiate formation of the DNA replication initiation complex once per cell cycle. Binds the DnaA box (a 9 base pair repeat at the origin) and separates the double-stranded (ds)DNA. Forms a right-handed helical filament on oriC DNA; dsDNA binds to the exterior of the filament while single-stranded (ss)DNA is stabiized in the filament's interior. The ATP-DnaA-oriC complex binds and stabilizes one strand of the AT-rich DNA unwinding element (DUE), permitting loading of DNA polymerase. After initiation quickly degrades to an ADP-DnaA complex that is not apt for DNA replication. Binds acidic phospholipids. The chain is Chromosomal replication initiator protein DnaA from Clostridium perfringens (strain SM101 / Type A).